A 351-amino-acid polypeptide reads, in one-letter code: Histidinol-phosphate aminotransferase (351 aa).

Lys-213 is subject to N6-(pyridoxal phosphate)lysine.

Belongs to the class-II pyridoxal-phosphate-dependent aminotransferase family. Histidinol-phosphate aminotransferase subfamily. In terms of assembly, homodimer. It depends on pyridoxal 5'-phosphate as a cofactor.

The enzyme catalyses L-histidinol phosphate + 2-oxoglutarate = 3-(imidazol-4-yl)-2-oxopropyl phosphate + L-glutamate. It participates in amino-acid biosynthesis; L-histidine biosynthesis; L-histidine from 5-phospho-alpha-D-ribose 1-diphosphate: step 7/9. The sequence is that of Histidinol-phosphate aminotransferase from Clostridium kluyveri (strain NBRC 12016).